The sequence spans 673 residues: eEF1A lysine and N-terminal methyltransferase homolog (673 aa).

The protein belongs to the methyltransferase superfamily.

It carries out the reaction L-lysyl-[protein] + S-adenosyl-L-methionine = N(6)-methyl-L-lysyl-[protein] + S-adenosyl-L-homocysteine + H(+). It catalyses the reaction N(6)-methyl-L-lysyl-[protein] + S-adenosyl-L-methionine = N(6),N(6)-dimethyl-L-lysyl-[protein] + S-adenosyl-L-homocysteine + H(+). The enzyme catalyses N-terminal glycyl-L-lysyl-L-glutamyl-[protein] + 3 S-adenosyl-L-methionine = N-terminal N,N,N-trimethyl-glycyl-L-lysyl-L-glutamyl-[protein] + 3 S-adenosyl-L-homocysteine + 3 H(+). Dual methyltransferase. It catalyzes N-terminal methylation of target proteins via its C-terminus. It catalyzes dimethylation on lysine residues of target proteins via its N-terminus. This Drosophila pseudoobscura pseudoobscura (Fruit fly) protein is eEF1A lysine and N-terminal methyltransferase homolog.